The chain runs to 202 residues: Probable cytochrome c oxidase subunit 3 (202 aa).

The next 5 membrane-spanning stretches (helical) occupy residues V30–A50, A69–S89, W101–Y121, L141–L161, and I178–I198.

The protein belongs to the cytochrome c oxidase subunit 3 family.

It localises to the cell membrane. The enzyme catalyses 4 Fe(II)-[cytochrome c] + O2 + 8 H(+)(in) = 4 Fe(III)-[cytochrome c] + 2 H2O + 4 H(+)(out). This is Probable cytochrome c oxidase subunit 3 (ctaE) from Mycobacterium leprae (strain TN).